A 614-amino-acid chain; its full sequence is Zinc metalloproteinase-disintegrin-like protein H4 subunit A (614 aa).

Residues 1–20 (MIQPLLVVTCLVVFPYQVSS) form the signal peptide. The propeptide occupies 21–193 (IILESGNVND…RKASQLVATS (173 aa)). Glutamate 194 carries the post-translational modification Pyrrolidone carboxylic acid (Glu). Residues 201–397 (KYIELVIVVD…IKSKCIDNKP (197 aa)) form the Peptidase M12B domain. N-linked (GlcNAc...) asparagine glycosylation is present at asparagine 220. 17 disulfides stabilise this stretch: cysteine 312–cysteine 392, cysteine 352–cysteine 376, cysteine 354–cysteine 359, cysteine 408–cysteine 437, cysteine 419–cysteine 432, cysteine 421–cysteine 427, cysteine 431–cysteine 454, cysteine 445–cysteine 451, cysteine 450–cysteine 476, cysteine 463–cysteine 483, cysteine 470–cysteine 502, cysteine 495–cysteine 507, cysteine 514–cysteine 564, cysteine 529–cysteine 575, cysteine 542–cysteine 552, cysteine 559–cysteine 601, and cysteine 595–cysteine 607. Histidine 337 contacts Zn(2+). The short motif at 337 to 348 (HELGHNLGMDHD) is the Metal-binding element. Catalysis depends on glutamate 338, which acts as the Proton acceptor. Positions 341 and 347 each coordinate Zn(2+). A Disintegrin domain is found at 405 to 491 (PAFCGNYFVE…ECPTDVLQRN (87 aa)). 5 residues coordinate Ca(2+): asparagine 410, phenylalanine 412, glutamate 414, glutamate 417, and aspartate 420. A glycan (N-linked (GlcNAc...) asparagine) is linked at asparagine 433. A D/ECD-tripeptide motif is present at residues 469-471 (ECD). Residues aspartate 471 and aspartate 486 each contribute to the Ca(2+) site.

It belongs to the venom metalloproteinase (M12B) family. P-III subfamily. Homodimer; disulfide-linked. Heterodimer of A and B subunits; disulfide-linked. The cofactor is Zn(2+). N-glycosylated. Post-translationally, the N-terminus is blocked. Expressed by the venom gland (at protein level). Expressed by the venom gland.

The protein resides in the secreted. The proteolytic activity of the heterodimer of A and B subunits requires Zn(2+) and Ca(2+) ions. Its function is as follows. Heterodimer (A and B subunits): Zinc metalloprotease that has fibrinogenolytic and hemorrhagic activities. Cleaves insulin B chain preferably at '40-Tyr-|-Leu-41' bond, but also at '28-Gln-|-His-29' and '34-His-|-Leu-35' bonds. Hydrolyzes effectively isolated extracellular matrix (ECM) bovine fibronectin, and only slightly, basal membrane (BM) proteins human collagen IV and murine laminin, in vitro. Cleaves nidogen-1 (at '350-Ser-|-Phe-351' and '380-Tyr-|-Asn-381' bonds), but not laminin, in a solubilized BM preparation. Hydrolyzes plasma proteins involved in blood coagulation in vitro. It slightly shortens prothrombin time and significantly prolongs thrombin time. Has potent alpha-fibrinogenase activity cleaving human fibrinogen alpha chain at '441-Glu-|-Leu-442' and '539-Glu-|-Phe-540' bonds, and to a lesser extent, beta chain at '52-Lys-|-Arg-53' and '48-Pro-|-Leu-49' bonds, but does not cleave gamma chain. Hydrolyzes bovine prothrombin at '200-Ser-|-Gly-201' bond, but does not activate it, however, it cleaves fragment 1 and prethrombin 1 from it. Hydrolyzes bovine factor X heavy chain, but the cleavage does not produce an activated factor Xa heavy chain. No hydrolysis or activation of plasminogen. The ability to degrade some of the ECM, BM and plasma proteins is likely the main contributor to its hemorrhagic activity. Inhibits platelet aggregation induced by collagen in vitro. Its binding to glycosaminoglycans (GAGs) may assist in concentrating it in the proximity of blood vessel walls enabling in vivo degradation of BM protein components. Cytotoxic to cultured HeLa cancer cells in a concentration- and time-dependent manner. In the solubilized BM preparation (Matrigel), it induces morphological changes in the HeLa cells and inhibits their adhesion, however, the viability of the cells is not reduced. This Vipera ammodytes ammodytes (Western sand viper) protein is Zinc metalloproteinase-disintegrin-like protein H4 subunit A.